The chain runs to 265 residues: Ribosomal RNA small subunit methyltransferase A (265 aa).

S-adenosyl-L-methionine contacts are provided by H17, L19, G44, E65, D90, and N112.

It belongs to the class I-like SAM-binding methyltransferase superfamily. rRNA adenine N(6)-methyltransferase family. RsmA subfamily.

It is found in the cytoplasm. The enzyme catalyses adenosine(1518)/adenosine(1519) in 16S rRNA + 4 S-adenosyl-L-methionine = N(6)-dimethyladenosine(1518)/N(6)-dimethyladenosine(1519) in 16S rRNA + 4 S-adenosyl-L-homocysteine + 4 H(+). Its function is as follows. Specifically dimethylates two adjacent adenosines (A1518 and A1519) in the loop of a conserved hairpin near the 3'-end of 16S rRNA in the 30S particle. May play a critical role in biogenesis of 30S subunits. The protein is Ribosomal RNA small subunit methyltransferase A of Xylella fastidiosa (strain Temecula1 / ATCC 700964).